The following is a 796-amino-acid chain: Probable coatomer subunit beta' (796 aa).

WD repeat units follow at residues 4–42 (LDFQ…GIWN), 46–84 (QTLV…RVYN), 88–126 (GEKV…KCFN), 131–170 (WKCV…KVWS), 172–214 (GSSV…KVWD), and 218–256 (KACV…KIWH).

This sequence belongs to the WD repeat COPB2 family. In terms of assembly, oligomeric complex that consists of at least the alpha, beta, beta', gamma, delta, epsilon and zeta subunits.

It is found in the cytoplasm. The protein resides in the golgi apparatus membrane. Its subcellular location is the cytoplasmic vesicle. The protein localises to the COPI-coated vesicle membrane. The coatomer is a cytosolic protein complex that binds to dilysine motifs and reversibly associates with Golgi non-clathrin-coated vesicles, which further mediate biosynthetic protein transport from the ER, via the Golgi up to the trans Golgi network. Coatomer complex is required for budding from Golgi membranes, and is essential for the retrograde Golgi-to-ER transport of dilysine-tagged proteins. This chain is Probable coatomer subunit beta' (sec27), found in Schizosaccharomyces pombe (strain 972 / ATCC 24843) (Fission yeast).